Reading from the N-terminus, the 62-residue chain is Large ribosomal subunit protein eL24 (62 aa).

Zn(2+)-binding residues include Cys-6, Cys-9, Cys-32, and Cys-36. The C4-type zinc-finger motif lies at 6–36 (CSFCEGTIEPGCGKKYVKKDGSVMHFCSSKC).

Belongs to the eukaryotic ribosomal protein eL24 family. In terms of assembly, part of the 50S ribosomal subunit. Forms a cluster with proteins L3 and L14. Requires Zn(2+) as cofactor.

In terms of biological role, binds to the 23S rRNA. The chain is Large ribosomal subunit protein eL24 from Methanococcus maripaludis (strain C5 / ATCC BAA-1333).